The chain runs to 289 residues: 4-hydroxy-tetrahydrodipicolinate synthase (289 aa).

A pyruvate-binding site is contributed by threonine 43. Tyrosine 131 (proton donor/acceptor) is an active-site residue. The Schiff-base intermediate with substrate role is filled by lysine 160. Valine 200 lines the pyruvate pocket.

It belongs to the DapA family. In terms of assembly, homotetramer; dimer of dimers.

Its subcellular location is the cytoplasm. It carries out the reaction L-aspartate 4-semialdehyde + pyruvate = (2S,4S)-4-hydroxy-2,3,4,5-tetrahydrodipicolinate + H2O + H(+). The protein operates within amino-acid biosynthesis; L-lysine biosynthesis via DAP pathway; (S)-tetrahydrodipicolinate from L-aspartate: step 3/4. Its function is as follows. Catalyzes the condensation of (S)-aspartate-beta-semialdehyde [(S)-ASA] and pyruvate to 4-hydroxy-tetrahydrodipicolinate (HTPA). The polypeptide is 4-hydroxy-tetrahydrodipicolinate synthase (Methanococcus maripaludis (strain C7 / ATCC BAA-1331)).